A 96-amino-acid chain; its full sequence is MAPFPLKSFIPPQVANPTALNAFPSSARMGRIVDFYSRLPHGPAPKKSSNSFFSWYYKKYLGKNASGAPLLHLVGAVLVFSYASEYYYHIRHHEEH.

It belongs to the ATPase F chain family.

Its subcellular location is the mitochondrion. It is found in the mitochondrion inner membrane. In terms of biological role, mitochondrial membrane ATP synthase (F(1)F(0) ATP synthase or Complex V) produces ATP from ADP in the presence of a proton gradient across the membrane which is generated by electron transport complexes of the respiratory chain. F-type ATPases consist of two structural domains, F(1) - containing the extramembraneous catalytic core and F(0) - containing the membrane proton channel, linked together by a central stalk and a peripheral stalk. During catalysis, ATP synthesis in the catalytic domain of F(1) is coupled via a rotary mechanism of the central stalk subunits to proton translocation. This is ATP synthase subunit f, mitochondrial (atp17) from Schizosaccharomyces pombe (strain 972 / ATCC 24843) (Fission yeast).